We begin with the raw amino-acid sequence, 314 residues long: MTASTIPRQIAIIGSGNIGTDLMIKVLRLSKTLEVGAMVGIDPDSDGLARANRLGVPTTSDGVDGLIRMPNFEAIDIVLDATSARAHAANYTALRRYRKRMIDLTPAAVGPFVVPAVNMGASLSADNVNMVTCGGQATIPIVAAISQVTPVAYAEIVASIASKSAGPGTRQNIDEFTETTAHAIEQVGGARKGKAIIILNPAEPPLIMRDTVLALIGPSDHDAVKGSIRAMVDAVAEYVPGYRLKQRIEIQPLDGLPVGTLTSEPVTHKVSVFLEVEGAAHYLPAYAGNLDIMTSAALRVAEAMAAQKLSGAVA.

Residue 15–18 (SGNI) coordinates NAD(+). The Acyl-thioester intermediate role is filled by C133. Residues 164 to 172 (SAGPGTRQN) and N289 each bind NAD(+).

It belongs to the acetaldehyde dehydrogenase family.

It carries out the reaction acetaldehyde + NAD(+) + CoA = acetyl-CoA + NADH + H(+). The chain is Acetaldehyde dehydrogenase 2 from Nocardioides sp. (strain ATCC BAA-499 / JS614).